A 307-amino-acid polypeptide reads, in one-letter code: Probable transposase for transposon Tn903 (307 aa).

Functionally, required for transposition of transposon Tn903. The sequence is that of Probable transposase for transposon Tn903 from Escherichia coli.